Reading from the N-terminus, the 125-residue chain is Large ribosomal subunit protein bL12 (125 aa).

This sequence belongs to the bacterial ribosomal protein bL12 family. As to quaternary structure, homodimer. Part of the ribosomal stalk of the 50S ribosomal subunit. Forms a multimeric L10(L12)X complex, where L10 forms an elongated spine to which 2 to 4 L12 dimers bind in a sequential fashion. Binds GTP-bound translation factors.

Functionally, forms part of the ribosomal stalk which helps the ribosome interact with GTP-bound translation factors. Is thus essential for accurate translation. The polypeptide is Large ribosomal subunit protein bL12 (Syntrophomonas wolfei subsp. wolfei (strain DSM 2245B / Goettingen)).